The following is a 402-amino-acid chain: Imidazolonepropionase (402 aa).

His66 and His68 together coordinate Fe(3+). His66 and His68 together coordinate Zn(2+). 4-imidazolone-5-propanoate contacts are provided by Arg75, Tyr138, and His171. Tyr138 lines the N-formimidoyl-L-glutamate pocket. His236 lines the Fe(3+) pocket. His236 is a Zn(2+) binding site. A 4-imidazolone-5-propanoate-binding site is contributed by Gln239. Residue Asp311 participates in Fe(3+) binding. Asp311 lines the Zn(2+) pocket. N-formimidoyl-L-glutamate is bound by residues Asn313 and Gly315. Thr316 contributes to the 4-imidazolone-5-propanoate binding site.

The protein belongs to the metallo-dependent hydrolases superfamily. HutI family. Requires Zn(2+) as cofactor. Fe(3+) serves as cofactor.

It localises to the cytoplasm. It catalyses the reaction 4-imidazolone-5-propanoate + H2O = N-formimidoyl-L-glutamate. Its pathway is amino-acid degradation; L-histidine degradation into L-glutamate; N-formimidoyl-L-glutamate from L-histidine: step 3/3. In terms of biological role, catalyzes the hydrolytic cleavage of the carbon-nitrogen bond in imidazolone-5-propanoate to yield N-formimidoyl-L-glutamate. It is the third step in the universal histidine degradation pathway. The chain is Imidazolonepropionase from Pseudomonas paraeruginosa (strain DSM 24068 / PA7) (Pseudomonas aeruginosa (strain PA7)).